A 295-amino-acid polypeptide reads, in one-letter code: Aspartate carbamoyltransferase catalytic subunit (295 aa).

Residues Arg-49 and Thr-50 each contribute to the carbamoyl phosphate site. Lys-77 serves as a coordination point for L-aspartate. Carbamoyl phosphate is bound by residues Arg-99, His-127, and Gln-130. L-aspartate is bound by residues Arg-161 and Arg-212. 2 residues coordinate carbamoyl phosphate: Gly-251 and Pro-252.

It belongs to the aspartate/ornithine carbamoyltransferase superfamily. ATCase family. In terms of assembly, heterododecamer (2C3:3R2) of six catalytic PyrB chains organized as two trimers (C3), and six regulatory PyrI chains organized as three dimers (R2).

It catalyses the reaction carbamoyl phosphate + L-aspartate = N-carbamoyl-L-aspartate + phosphate + H(+). It participates in pyrimidine metabolism; UMP biosynthesis via de novo pathway; (S)-dihydroorotate from bicarbonate: step 2/3. Functionally, catalyzes the condensation of carbamoyl phosphate and aspartate to form carbamoyl aspartate and inorganic phosphate, the committed step in the de novo pyrimidine nucleotide biosynthesis pathway. The sequence is that of Aspartate carbamoyltransferase catalytic subunit from Campylobacter jejuni subsp. jejuni serotype O:23/36 (strain 81-176).